The following is a 66-amino-acid chain: Cold shock-like protein CspLA (66 aa).

A CSD domain is found at 4–63; the sequence is GTVKWFNAEKGFGFIERENGDDVFVHFSAIQGDGFKSLDEGQAVTFDVEEGQRGPQAANV.

In terms of assembly, homodimer.

Its subcellular location is the cytoplasm. In Listeria innocua serovar 6a (strain ATCC BAA-680 / CLIP 11262), this protein is Cold shock-like protein CspLA (cspLA).